A 189-amino-acid polypeptide reads, in one-letter code: Interferon alpha-14 (189 aa).

The N-terminal stretch at 1-23 (MALPFALMMALVVLSCKSSCSLG) is a signal peptide. 2 disulfides stabilise this stretch: C24/C122 and C52/C162. N-linked (GlcNAc...) asparagine glycosylation is present at N95.

This sequence belongs to the alpha/beta interferon family.

It localises to the secreted. Produced by macrophages, IFN-alpha have antiviral activities. Interferon stimulates the production of two enzymes: a protein kinase and an oligoadenylate synthetase. In Homo sapiens (Human), this protein is Interferon alpha-14 (IFNA14).